Here is an 81-residue protein sequence, read N- to C-terminus: Conotoxin ArMKLT2-01 (81 aa).

The signal sequence occupies residues 1-19 (MKLTCVIIVVALFLTACHA). Positions 20–43 (KDKQEHPAVRGSDDMQDSEDLKLA) are excised as a propeptide. Cystine bridges form between Cys46/Cys61, Cys53/Cys65, and Cys60/Cys74.

It belongs to the conotoxin O1 superfamily. As to expression, expressed by the venom duct.

It localises to the secreted. The chain is Conotoxin ArMKLT2-01 from Conus arenatus (Sand-dusted cone).